The chain runs to 51 residues: Non-specific lipid-transfer protein (51 aa).

Belongs to the plant LTP family.

In terms of biological role, plant non-specific lipid-transfer proteins transfer phospholipids as well as galactolipids across membranes. May play a role in wax or cutin deposition in the cell walls of expanding epidermal cells and certain secretory tissues. This Lycium barbarum (Barbary matrimony-vine) protein is Non-specific lipid-transfer protein.